A 169-amino-acid chain; its full sequence is Peptide methionine sulfoxide reductase MsrA (169 aa).

Residue Cys10 is part of the active site.

It belongs to the MsrA Met sulfoxide reductase family.

The enzyme catalyses L-methionyl-[protein] + [thioredoxin]-disulfide + H2O = L-methionyl-(S)-S-oxide-[protein] + [thioredoxin]-dithiol. It carries out the reaction [thioredoxin]-disulfide + L-methionine + H2O = L-methionine (S)-S-oxide + [thioredoxin]-dithiol. Functionally, has an important function as a repair enzyme for proteins that have been inactivated by oxidation. Catalyzes the reversible oxidation-reduction of methionine sulfoxide in proteins to methionine. The chain is Peptide methionine sulfoxide reductase MsrA from Streptococcus pyogenes serotype M3 (strain ATCC BAA-595 / MGAS315).